Consider the following 235-residue polypeptide: Proteasome subunit beta type-1 (235 aa).

The propeptide occupies 1–20 (MSRLGFEQFPDYQVPGMKHP).

Belongs to the peptidase T1B family. In terms of assembly, the 26S proteasome consists of a 20S proteasome core and two 19S regulatory subunits. The 20S proteasome core is composed of 28 subunits that are arranged in four stacked rings, resulting in a barrel-shaped structure. The two end rings are each formed by seven alpha subunits, and the two central rings are each formed by seven beta subunits. The catalytic chamber with the active sites is on the inside of the barrel.

The protein localises to the cytoplasm. Its subcellular location is the nucleus. Non-catalytic component of the proteasome, a multicatalytic proteinase complex which is characterized by its ability to cleave peptides with Arg, Phe, Tyr, Leu, and Glu adjacent to the leaving group at neutral or slightly basic pH. The proteasome has an ATP-dependent proteolytic activity. The chain is Proteasome subunit beta type-1 (Prosbeta6) from Drosophila melanogaster (Fruit fly).